A 63-amino-acid chain; its full sequence is Small ribosomal subunit protein bS21 (63 aa).

This sequence belongs to the bacterial ribosomal protein bS21 family.

The chain is Small ribosomal subunit protein bS21 from Syntrophus aciditrophicus (strain SB).